We begin with the raw amino-acid sequence, 245 residues long: 3-deoxy-manno-octulosonate cytidylyltransferase (245 aa).

This sequence belongs to the KdsB family.

Its subcellular location is the cytoplasm. The enzyme catalyses 3-deoxy-alpha-D-manno-oct-2-ulosonate + CTP = CMP-3-deoxy-beta-D-manno-octulosonate + diphosphate. Its pathway is nucleotide-sugar biosynthesis; CMP-3-deoxy-D-manno-octulosonate biosynthesis; CMP-3-deoxy-D-manno-octulosonate from 3-deoxy-D-manno-octulosonate and CTP: step 1/1. It functions in the pathway bacterial outer membrane biogenesis; lipopolysaccharide biosynthesis. In terms of biological role, activates KDO (a required 8-carbon sugar) for incorporation into bacterial lipopolysaccharide in Gram-negative bacteria. This is 3-deoxy-manno-octulosonate cytidylyltransferase from Rhodopseudomonas palustris (strain BisB18).